A 1154-amino-acid polypeptide reads, in one-letter code: Diacylglycerol kinase eta (1154 aa).

Positions 1–54 (MAGAGYQHHPPGGAAVGTSAVSPTAAGPGEDSSDSEAEQGGPQKLIRKVSTSGQ) are disordered. Positions 59–152 (TSIKEGQLLK…WISSLKSVQS (94 aa)) constitute a PH domain. Phorbol-ester/DAG-type zinc fingers lie at residues 169-219 (MHNW…TNNC) and 241-292 (PHQW…HPVC). In terms of domain architecture, DAGKc spans 322–457 (FCVSPLLVFV…LDRWSIMTYE (136 aa)). Disordered regions lie at residues 560–608 (QASR…AVKP), 634–678 (DEQT…APEA), and 1123–1154 (FKME…SPGN). Over residues 573-586 (PEEDAVESSSEESL) the composition is skewed to acidic residues. Residues 656–667 (DDSKDNDTKESP) are compositionally biased toward basic and acidic residues. A compositionally biased stretch (polar residues) spans 1131–1154 (QKTSSQPGPGDTESGSYEANSPGN).

Belongs to the eukaryotic diacylglycerol kinase family. In terms of assembly, interacts with RAF1 and BRAF. Phosphorylated. Phosphorylation does not inhibit catalytic activity. In terms of tissue distribution, expressed in a wide variety of tissues. Most abundant in the brain and testis; also found in lung, spleen, and prostate (at protein level).

It is found in the cytoplasm. Its subcellular location is the cell membrane. It carries out the reaction a 1,2-diacyl-sn-glycerol + ATP = a 1,2-diacyl-sn-glycero-3-phosphate + ADP + H(+). It catalyses the reaction 1,2-di-(9Z-octadecenoyl)-sn-glycerol + ATP = 1,2-di-(9Z-octadecenoyl)-sn-glycero-3-phosphate + ADP + H(+). It participates in lipid metabolism; glycerolipid metabolism. Its function is as follows. Diacylglycerol kinase that converts diacylglycerol/DAG into phosphatidic acid/phosphatidate/PA and regulates the respective levels of these two bioactive lipids. Thereby, acts as a central switch between the signaling pathways activated by these second messengers with different cellular targets and opposite effects in numerous biological processes. Plays a key role in promoting cell growth. Activates the Ras/B-Raf/C-Raf/MEK/ERK signaling pathway induced by EGF. Regulates the recruitment of RAF1 and BRAF from cytoplasm to membranes and their heterodimerization. The chain is Diacylglycerol kinase eta (DGKH) from Mesocricetus auratus (Golden hamster).